Here is a 402-residue protein sequence, read N- to C-terminus: Multidrug resistance protein MdtH (402 aa).

Transmembrane regions (helical) follow at residues 13-33 (YFLLVDNMLVVLGFFVVFPLI), 34-54 (SIRFVDQMGWAALMVGIALGL), 99-116 (PWVLWFSCILSGLGGTLF), 139-159 (ILMMQDSAGAVIGALLGSWLL), 165-185 (LVCSAGAALFIACAAFNAWYL), 214-234 (VLTLTGYYMLAVQVMLMLPIM), 243-263 (AAVKWMYAIEATISLTLLYPI), 277-297 (LMAGLLVMTLAMLPIGMTSSL), 300-320 (LFTLICLFYIGSIIAEPARET), 340-360 (LGLAFGGALGYAGGGWLFDAG), and 369-389 (PWLMLGAIGVITFLALWWQFS).

Belongs to the major facilitator superfamily. DHA1 family. MdtH (TC 2.A.1.2.21) subfamily.

The protein localises to the cell inner membrane. The chain is Multidrug resistance protein MdtH from Klebsiella pneumoniae subsp. pneumoniae (strain ATCC 700721 / MGH 78578).